Consider the following 1026-residue polypeptide: MAKTDPLTLQQLLAQRHWENPALTQLNRLPAHTPLASWRNADAARGDLASPSQRLLDGEWGFSYFDRPQAVPDAWINGDLPQVGRLSVPSNWQLSGYDAPIYTNVQYPIPTDPPRVPDDNPTGCYSLTFHCQPAWLQSGQTRIIFDGVNSAFYLWCNGEFIGYSQDSRLPAEFDLSQRLLEGENRIAVMVLRWCDGSYLEDQDMWRMSGIFRSVSLLHKPHVRLDDIHIDTRLSPEYRSAQLRVLALCSLTDASAYQLKVTLWRDDTLIAQHQQPFGTPVVDERGRYLDRTRLSLQIDQPLLWNAETPHLYRAVIALLDADGTLIEAEACDVGFRQVEVSGGLLKLNGKALLIRGTNRHEHHPDRGQVMDEPAMIADILLMKQHNFNAVRCSHYPNHPLWYRLCDRYGLYVVDEANIETHGMQPMNRLADDPSWFSAFSERVTRMVQRDRNHACIIIWSLGNESGHGSTHDALYGWIKSDDPSRPVQYEGGGADTAASDIICPMYARVDRDQPFEAVPKWSIKKWIALPEETRPLILCEYAHAMGNSLGGFSRYWQAFRQYPPLQGGFVWDWADQNLTRQAADGSSWQAYGGDFGDMPNDRQFCMNGLVFADRSPHPALFEAKRAQQFFQFQLENTSPITLGITSEYLFRHSDNERLCWRIEHHGEQVAGGQITLNLPPEGTVSLMLGELPSLAGELWLRVEVIQPAATAWSPANHRVAWDGWQLPAALSLPKPDVPGEQPRLHPQSQLIEVVQAGQRWQFCRQSGELIQWLQADKPQLLSPLRDLFVRAPLDNDIGISEANRIDPHAWAERWQRAGYYRLESQLLRLQTDILNDGVQIRSEQAWLADGEPRFLSRKCYRINRQGEMLLEVEVDIAAGLPEPARIGLHCQLAEVAEEVCWLGLGPHENYPDRRLAAEFSRWQLPLGALSTPYVFPCENGLRGGTRELTFGHWHIRGDFHFSLSRHSVEQLRKTSHRHLLRDEAGCWLTLDGFHMGVGGDDSWSPSVDEEFLLRARQYRYRLILTRG.

Substrate is bound by residues Asn-104 and Asp-203. Asp-203 contributes to the Na(+) binding site. Positions 418, 420, and 463 each coordinate Mg(2+). Substrate is bound by residues Glu-463 and 539–542; that span reads EYAH. Glu-463 serves as the catalytic Proton donor. The active-site Nucleophile is Glu-539. Asn-599 is a Mg(2+) binding site. 2 residues coordinate Na(+): Phe-603 and Asn-606. Asn-606 and Trp-1002 together coordinate substrate.

The protein belongs to the glycosyl hydrolase 2 family. In terms of assembly, homotetramer. The cofactor is Mg(2+). Na(+) is required as a cofactor.

It catalyses the reaction Hydrolysis of terminal non-reducing beta-D-galactose residues in beta-D-galactosides.. The polypeptide is Beta-galactosidase (Erwinia tasmaniensis (strain DSM 17950 / CFBP 7177 / CIP 109463 / NCPPB 4357 / Et1/99)).